The chain runs to 327 residues: Methionine import ATP-binding protein MetN (327 aa).

The region spanning 3-239 is the ABC transporter domain; it reads VELKNIEKIY…PKHAVTKELL (237 aa). Residue 36–43 coordinates ATP; sequence GYSGAGKS.

It belongs to the ABC transporter superfamily. Methionine importer (TC 3.A.1.24) family. As to quaternary structure, the complex is composed of two ATP-binding proteins (MetN), two transmembrane proteins (MetI) and a solute-binding protein (MetQ).

Its subcellular location is the cell inner membrane. The enzyme catalyses L-methionine(out) + ATP + H2O = L-methionine(in) + ADP + phosphate + H(+). It carries out the reaction D-methionine(out) + ATP + H2O = D-methionine(in) + ADP + phosphate + H(+). Functionally, part of the ABC transporter complex MetNIQ involved in methionine import. Responsible for energy coupling to the transport system. The chain is Methionine import ATP-binding protein MetN from Helicobacter pylori (strain J99 / ATCC 700824) (Campylobacter pylori J99).